A 284-amino-acid polypeptide reads, in one-letter code: ATP phosphoribosyltransferase (284 aa).

The protein belongs to the ATP phosphoribosyltransferase family. Long subfamily. Mg(2+) is required as a cofactor.

It is found in the cytoplasm. The catalysed reaction is 1-(5-phospho-beta-D-ribosyl)-ATP + diphosphate = 5-phospho-alpha-D-ribose 1-diphosphate + ATP. The protein operates within amino-acid biosynthesis; L-histidine biosynthesis; L-histidine from 5-phospho-alpha-D-ribose 1-diphosphate: step 1/9. Its activity is regulated as follows. Feedback inhibited by histidine. Functionally, catalyzes the condensation of ATP and 5-phosphoribose 1-diphosphate to form N'-(5'-phosphoribosyl)-ATP (PR-ATP). Has a crucial role in the pathway because the rate of histidine biosynthesis seems to be controlled primarily by regulation of HisG enzymatic activity. In Corynebacterium kroppenstedtii (strain DSM 44385 / JCM 11950 / CIP 105744 / CCUG 35717), this protein is ATP phosphoribosyltransferase.